A 625-amino-acid polypeptide reads, in one-letter code: MNFQENYDVIVIGGGHAGVEASLAAARMGSKTLLMTINLNMVAFMPCNPSIGGSAKGIVVREIDALGGEMGRNIDKTYIQMKMLNTGKGPAVRALRAQADKDEYAASMKNTVSDQENLTLRQGMVEELILDDEKQKVIGVRTSTGTQYGAKAVIITTGTALRGEIIIGELKYSSGPNNSLSSIGLADNLHEIGFEIGRFKTGTPPRVLASSIDYDKTEIQPGDEAPNHFSFMSSDEDYLKDQIPCWLTYTTENSHTILRDNLHRAPLFSGIVKGVGPRYCPSIEDKITRFADKPRHQLFLEPEGRNTEEVYIGGLSTSMPEDVQFDLVKSIPGLENAKMMRPGYAIEYDVVMPHQLRPTLETKLISGLFTAGQTNGTSGYEEAAGQGLVAGINAALKIQGKPEFILKRSEAYIGVMIDDLVTKGTLEPYRLLTSRAEYRLILRHDNADRRLTEIGRQVGLVSDAQWEHYQAKMAQFDREMKRLNSEKLKPLPDTQEKLGKLGFGPIKDALTGAEFLKRPEVHYDEVIDFIGQAPEVIDRTVIELIETEITYEGYIKKAMDQVDKMHRLEAKRIPKNMDWDKLDSIATEARQKFKKINPETLGQASRISGVNPADISILMVYLEGK.

FAD is bound by residues 13 to 18 (GGGHAG), valine 125, and serine 182. Position 276–290 (276–290 (GPRYCPSIEDKITRF)) interacts with NAD(+). An FAD-binding site is contributed by glutamine 373.

The protein belongs to the MnmG family. Homodimer. Heterotetramer of two MnmE and two MnmG subunits. FAD is required as a cofactor.

It is found in the cytoplasm. In terms of biological role, NAD-binding protein involved in the addition of a carboxymethylaminomethyl (cmnm) group at the wobble position (U34) of certain tRNAs, forming tRNA-cmnm(5)s(2)U34. The chain is tRNA uridine 5-carboxymethylaminomethyl modification enzyme MnmG from Lactococcus lactis subsp. cremoris (strain SK11).